The sequence spans 306 residues: Porphobilinogen deaminase (306 aa).

S-(dipyrrolylmethanemethyl)cysteine is present on Cys239.

The protein belongs to the HMBS family. As to quaternary structure, monomer. Dipyrromethane is required as a cofactor.

It carries out the reaction 4 porphobilinogen + H2O = hydroxymethylbilane + 4 NH4(+). The protein operates within porphyrin-containing compound metabolism; protoporphyrin-IX biosynthesis; coproporphyrinogen-III from 5-aminolevulinate: step 2/4. In terms of biological role, tetrapolymerization of the monopyrrole PBG into the hydroxymethylbilane pre-uroporphyrinogen in several discrete steps. This Helicobacter pylori (strain J99 / ATCC 700824) (Campylobacter pylori J99) protein is Porphobilinogen deaminase (hemC).